The chain runs to 163 residues: Inorganic pyrophosphatase (163 aa).

Glutamate 9 serves as a coordination point for Mg(2+). Residues lysine 17, arginine 31, and tyrosine 43 each contribute to the substrate site. Residues aspartate 53, aspartate 58, aspartate 85, and aspartate 90 each contribute to the Mg(2+) site. Residue aspartate 90 is the Proton acceptor of the active site. Tyrosine 127 contributes to the substrate binding site.

This sequence belongs to the PPase family. In terms of assembly, homohexamer. Mg(2+) serves as cofactor.

The protein localises to the cytoplasm. It carries out the reaction diphosphate + H2O = 2 phosphate + H(+). Catalyzes the hydrolysis of inorganic pyrophosphate (PPi) forming two phosphate ions. This is Inorganic pyrophosphatase from Leifsonia xyli subsp. xyli (strain CTCB07).